Here is a 418-residue protein sequence, read N- to C-terminus: 3-isopropylmalate dehydratase large subunit (418 aa).

Residues Cys-298, Cys-358, and Cys-361 each coordinate [4Fe-4S] cluster.

Belongs to the aconitase/IPM isomerase family. LeuC type 2 subfamily. As to quaternary structure, heterodimer of LeuC and LeuD. The cofactor is [4Fe-4S] cluster.

It carries out the reaction (2R,3S)-3-isopropylmalate = (2S)-2-isopropylmalate. It functions in the pathway amino-acid biosynthesis; L-leucine biosynthesis; L-leucine from 3-methyl-2-oxobutanoate: step 2/4. Its function is as follows. Catalyzes the isomerization between 2-isopropylmalate and 3-isopropylmalate, via the formation of 2-isopropylmaleate. The polypeptide is 3-isopropylmalate dehydratase large subunit (Caldanaerobacter subterraneus subsp. tengcongensis (strain DSM 15242 / JCM 11007 / NBRC 100824 / MB4) (Thermoanaerobacter tengcongensis)).